The chain runs to 369 residues: Flagellar P-ring protein (369 aa).

The signal sequence occupies residues 1-22 (MIKLKQLIAATLLLSAAFGAHA).

This sequence belongs to the FlgI family. In terms of assembly, the basal body constitutes a major portion of the flagellar organelle and consists of four rings (L,P,S, and M) mounted on a central rod.

The protein localises to the periplasm. It is found in the bacterial flagellum basal body. Its function is as follows. Assembles around the rod to form the L-ring and probably protects the motor/basal body from shearing forces during rotation. The chain is Flagellar P-ring protein from Pseudomonas syringae pv. tomato (strain ATCC BAA-871 / DC3000).